The chain runs to 77 residues: Envelope glycoprotein (77 aa).

The Extracellular segment spans residues 1–24 (LERQKNQNWYEGWFNSSPWFTTLL). The helical transmembrane segment at 25–45 (STIAGPLLLLLLLLILGPCII) threads the bilayer. Cys43 is lipidated: S-palmitoyl cysteine; by host. The Cytoplasmic portion of the chain corresponds to 46 to 77 (NRLVQFINNRVSAVKILVLRQKYQTLDNEDNL). Residues 68-71 (YQTL) carry the YXXL motif; contains endocytosis signal motif.

In terms of assembly, the mature envelope protein (Env) consists of a trimer of SU-TM heterodimers attached by noncovalent interactions or by a labile interchain disulfide bond. Specific enzymatic cleavages in vivo yield mature proteins. Envelope glycoproteins are synthesized as an inactive precursor that is N-glycosylated and processed likely by host cell furin or by a furin-like protease in the Golgi to yield the mature SU and TM proteins. The cleavage site between SU and TM requires the minimal sequence [KR]-X-[KR]-R. The R-peptide is released from the C-terminus of the cytoplasmic tail of the TM protein upon particle formation as a result of proteolytic cleavage by the viral protease. Cleavage of this peptide is required for TM to become fusogenic. Post-translationally, the transmembrane protein is palmitoylated. In terms of processing, the R-peptide is palmitoylated.

It is found in the virion membrane. The protein resides in the host cell membrane. In terms of biological role, the surface protein (SU) attaches the virus to the host cell by binding to its receptor. This interaction triggers the refolding of the transmembrane protein (TM) and is thought to activate its fusogenic potential by unmasking its fusion peptide. Fusion occurs at the host cell plasma membrane. Functionally, the transmembrane protein (TM) acts as a class I viral fusion protein. Under the current model, the protein has at least 3 conformational states: pre-fusion native state, pre-hairpin intermediate state, and post-fusion hairpin state. During viral and target cell membrane fusion, the coiled coil regions (heptad repeats) assume a trimer-of-hairpins structure, positioning the fusion peptide in close proximity to the C-terminal region of the ectodomain. The formation of this structure appears to drive apposition and subsequent fusion of viral and target cell membranes. Membranes fusion leads to delivery of the nucleocapsid into the cytoplasm. In Woolly monkey sarcoma virus (WMSV), this protein is Envelope glycoprotein (env).